Here is a 468-residue protein sequence, read N- to C-terminus: ATP synthase subunit beta (468 aa).

148–155 (GGAGVGKT) contributes to the ATP binding site.

Belongs to the ATPase alpha/beta chains family. In terms of assembly, F-type ATPases have 2 components, CF(1) - the catalytic core - and CF(0) - the membrane proton channel. CF(1) has five subunits: alpha(3), beta(3), gamma(1), delta(1), epsilon(1). CF(0) has three main subunits: a(1), b(2) and c(9-12). The alpha and beta chains form an alternating ring which encloses part of the gamma chain. CF(1) is attached to CF(0) by a central stalk formed by the gamma and epsilon chains, while a peripheral stalk is formed by the delta and b chains.

The protein localises to the cell inner membrane. It catalyses the reaction ATP + H2O + 4 H(+)(in) = ADP + phosphate + 5 H(+)(out). Produces ATP from ADP in the presence of a proton gradient across the membrane. The catalytic sites are hosted primarily by the beta subunits. In Stenotrophomonas maltophilia (strain R551-3), this protein is ATP synthase subunit beta.